The sequence spans 85 residues: Cell division topological specificity factor (85 aa).

Belongs to the MinE family.

Functionally, prevents the cell division inhibition by proteins MinC and MinD at internal division sites while permitting inhibition at polar sites. This ensures cell division at the proper site by restricting the formation of a division septum at the midpoint of the long axis of the cell. The sequence is that of Cell division topological specificity factor from Xanthomonas campestris pv. campestris (strain 8004).